Consider the following 375-residue polypeptide: Xylose transport system permease protein XylH (375 aa).

The next 10 membrane-spanning stretches (helical) occupy residues 9–29, 52–72, 85–105, 118–138, 159–179, 199–219, 220–240, 271–291, 319–339, and 348–368; these read LQVY…SVAT, LAIG…VGSL, VWWG…GLIF, VPSF…LIGL, LSDI…VLWG, DFTK…LLND, YRGI…GLFL, KLII…ILSA, LAGG…IASL, and VPTF…VWID.

This sequence belongs to the binding-protein-dependent transport system permease family. AraH/RbsC subfamily.

Its subcellular location is the cell inner membrane. Its function is as follows. Part of the binding-protein-dependent transport system for D-xylose. Probably responsible for the translocation of the substrate across the membrane. The polypeptide is Xylose transport system permease protein XylH (xylH) (Haemophilus influenzae (strain ATCC 51907 / DSM 11121 / KW20 / Rd)).